A 198-amino-acid chain; its full sequence is Probable chorismate pyruvate-lyase (198 aa).

Positions 73, 111, and 172 each coordinate substrate.

This sequence belongs to the UbiC family.

The protein localises to the cytoplasm. The catalysed reaction is chorismate = 4-hydroxybenzoate + pyruvate. The protein operates within cofactor biosynthesis; ubiquinone biosynthesis. Functionally, removes the pyruvyl group from chorismate, with concomitant aromatization of the ring, to provide 4-hydroxybenzoate (4HB) for the ubiquinone pathway. The protein is Probable chorismate pyruvate-lyase of Burkholderia orbicola (strain AU 1054).